Here is a 595-residue protein sequence, read N- to C-terminus: TNF receptor-associated factor family protein DDB_G0272348 (595 aa).

A disordered region spans residues 14 to 64 (SFTNNNSNNNNNNNNNSNSNNNNNNNNNNINNNNNHNNNNKNNSNNKNEIN). Low complexity predominate over residues 17 to 64 (NNNSNNNNNNNNNSNSNNNNNNNNNNINNNNNHNNNNKNNSNNKNEIN). The RING-type; degenerate zinc finger occupies 87-134 (CTICSDLLVNSFHADKFKAVQCKNGHYTTCLNCWEKHLEKKKNCIQCG). 2 TRAF-type zinc fingers span residues 189–253 (EHLK…INKE) and 254–311 (SHNA…SKLS). Residues 348-410 (LLNGQNKKIT…QQQQSQQQQQ (63 aa)) adopt a coiled-coil conformation. Positions 409-440 (QQSQQQQQSQQSQQNNNSNSHFINNNNNNINN) are enriched in low complexity. The disordered stretch occupies residues 409–450 (QQSQQQQQSQQSQQNNNSNSHFINNNNNNINNVQMSDSPNGG). A compositionally biased stretch (polar residues) spans 441–450 (VQMSDSPNGG). The 129-residue stretch at 456-584 (VYKNKWVISN…NDSITIEIEI (129 aa)) folds into the MATH domain.

The protein belongs to the TNF receptor-associated factor family. A subfamily.

Its subcellular location is the cytoplasm. Its function is as follows. Probable adapter protein and signal transducer that links members of the tumor necrosis factor receptor family to different signaling pathways by association with the receptor cytoplasmic domain and kinases. In Dictyostelium discoideum (Social amoeba), this protein is TNF receptor-associated factor family protein DDB_G0272348.